A 386-amino-acid chain; its full sequence is Lysophosphatidylserine lipase ABHD12 (386 aa).

The Cytoplasmic segment spans residues 1 to 66 (MRKRAEPVPP…YGLWSRLRMF (66 aa)). Residues 67-87 (LIFLLGLYIAIPFLVKICPAI) traverse the membrane as a helical segment. Over 88-386 (QTQLVFLNLV…RDFLGNTEQQ (299 aa)) the chain is Extracellular. Asparagine 114 carries an N-linked (GlcNAc...) asparagine glycan. Serine 237 serves as the catalytic Nucleophile. Residues aspartate 324 and histidine 363 each act as charge relay system in the active site.

The protein belongs to the serine esterase family.

It localises to the endoplasmic reticulum membrane. The catalysed reaction is 1-(9Z-octadecenoyl)-sn-glycero-3-phospho-L-serine + H2O = sn-glycero-3-phospho-L-serine + (9Z)-octadecenoate + H(+). It catalyses the reaction 1-(9Z-octadecenoyl)-sn-glycero-3-phospho-(1'-sn-glycerol) + H2O = sn-glycero-3-phospho-(1'-sn-glycerol) + (9Z)-octadecenoate + H(+). The enzyme catalyses 1-(9Z-octadecenoyl)-sn-glycero-3-phospho-(1D-myo-inositol) + H2O = sn-glycero-3-phospho-1D-myo-inositol + (9Z)-octadecenoate + H(+). It carries out the reaction 1-(9Z-octadecenoyl)-sn-glycero-3-phosphoethanolamine + H2O = sn-glycero-3-phosphoethanolamine + (9Z)-octadecenoate + H(+). The catalysed reaction is 1-(9Z-octadecenoyl)-sn-glycero-3-phosphocholine + H2O = 1-(9Z-octadecenoyl)-sn-glycerol + phosphocholine + H(+). It catalyses the reaction 2-(9Z-octadecenoyl)-glycerol + H2O = glycerol + (9Z)-octadecenoate + H(+). The enzyme catalyses 1-hexadecanoyl-sn-glycero-3-phospho-L-serine + H2O = sn-glycero-3-phospho-L-serine + hexadecanoate + H(+). It carries out the reaction 2-(5Z,8Z,11Z,14Z-eicosatetraenoyl)-glycerol + H2O = glycerol + (5Z,8Z,11Z,14Z)-eicosatetraenoate + H(+). The catalysed reaction is Hydrolyzes glycerol monoesters of long-chain fatty acids.. It catalyses the reaction 1-decanoylglycerol + H2O = decanoate + glycerol + H(+). The enzyme catalyses 1-dodecanoylglycerol + H2O = dodecanoate + glycerol + H(+). It carries out the reaction 1-tetradecanoylglycerol + H2O = tetradecanoate + glycerol + H(+). The catalysed reaction is 2-hexadecanoylglycerol + H2O = glycerol + hexadecanoate + H(+). It catalyses the reaction 1-(9Z-octadecenoyl)-glycerol + H2O = glycerol + (9Z)-octadecenoate + H(+). The enzyme catalyses 2-(9Z,12Z-octadecadienoyl)-glycerol + H2O = (9Z,12Z)-octadecadienoate + glycerol + H(+). It carries out the reaction 1-(5Z,8Z,11Z,14Z-eicosatetraenoyl)-glycerol + H2O = glycerol + (5Z,8Z,11Z,14Z)-eicosatetraenoate + H(+). The catalysed reaction is 1-(9Z,12Z-octadecadienoyl)-glycerol + H2O = (9Z,12Z)-octadecadienoate + glycerol + H(+). It catalyses the reaction 1-hexadecanoylglycerol + H2O = glycerol + hexadecanoate + H(+). The enzyme catalyses 1-octadecanoylglycerol + H2O = octadecanoate + glycerol + H(+). It carries out the reaction 1-octadecanoyl-2-(9,10-epoxyoctadecanoyl)-sn-glycero-3-phospho-L-serine + H2O = 9,10-epoxyoctadecanoate + 1-octadecanoyl-sn-glycero-3-phosphoserine + H(+). The catalysed reaction is 1-octadecanoyl-2-(10-hydroxyoctadecanoyl)-sn-glycero-3-phospho-L-serine + H2O = 1-octadecanoyl-sn-glycero-3-phosphoserine + 10-hydroxyoctadecanoate + H(+). It catalyses the reaction 1-hexadecanoyl-2-(10-hydroxyoctadecanoyl)-sn-glycero-3-phospho-L-serine + H2O = 10-hydroxyoctadecanoate + 1-hexadecanoyl-sn-glycero-3-phospho-L-serine + H(+). Lysophosphatidylserine (LPS) lipase that mediates the hydrolysis of lysophosphatidylserine, a class of signaling lipids that regulates immunological and neurological processes. Represents a major lysophosphatidylserine lipase in the brain, thereby playing a key role in the central nervous system. Also able to hydrolyze oxidized phosphatidylserine; oxidized phosphatidylserine is produced in response to severe inflammatory stress and constitutes a proapoptotic 'eat me' signal. Also has monoacylglycerol (MAG) lipase activity: hydrolyzes 2-arachidonoylglycerol (2-AG), thereby acting as a regulator of endocannabinoid signaling pathways. Has a strong preference for very-long-chain lipid substrates; substrate specificity is likely due to improved catalysis and not improved substrate binding. The chain is Lysophosphatidylserine lipase ABHD12 from Xenopus tropicalis (Western clawed frog).